The primary structure comprises 347 residues: UPF0283 membrane protein ECA1987 (347 aa).

Residues 1–11 (MNEPLKPRVTF) show a composition bias toward basic and acidic residues. The segment at 1-48 (MNEPLKPRVTFDDVSPQEPQPQLRAGLAFDEQSSTPFSPISREEEVPE) is disordered. 3 helical membrane passes run 70–90 (MVMA…VQSL), 99–119 (WIAL…VGSL), and 213–233 (ESTL…FIAW).

Belongs to the UPF0283 family.

It localises to the cell inner membrane. The protein is UPF0283 membrane protein ECA1987 of Pectobacterium atrosepticum (strain SCRI 1043 / ATCC BAA-672) (Erwinia carotovora subsp. atroseptica).